The sequence spans 370 residues: mRNA cap guanine-N(7) methyltransferase 1 (370 aa).

The segment covering 1–11 has biased composition (low complexity); that stretch reads MKRGFSDSPSS. Residues 1–34 form a disordered region; that stretch reads MKRGFSDSPSSSAPPPSSRFKSNPEGDSQFLEDE. The 281-residue stretch at 61–341 folds into the mRNA cap 0 methyltransferase domain; it reads SPIIHLKKLN…LYLSFVLRKR (281 aa). 70–71 serves as a coordination point for mRNA; sequence NN. S-adenosyl-L-methionine contacts are provided by residues Lys74, Ala92, Asp114, 150–151, and 172–174; these read DC and QFA.

This sequence belongs to the class I-like SAM-binding methyltransferase superfamily. mRNA cap 0 methyltransferase family.

Its subcellular location is the nucleus. It carries out the reaction a 5'-end (5'-triphosphoguanosine)-ribonucleoside in mRNA + S-adenosyl-L-methionine = a 5'-end (N(7)-methyl 5'-triphosphoguanosine)-ribonucleoside in mRNA + S-adenosyl-L-homocysteine. In terms of biological role, mRNA-capping methyltransferase that methylates the N7 position of the added guanosine to the 5'-cap structure of mRNAs. Binds RNA containing 5'-terminal GpppC. The sequence is that of mRNA cap guanine-N(7) methyltransferase 1 from Arabidopsis thaliana (Mouse-ear cress).